An 877-amino-acid chain; its full sequence is Bifunctional uridylyltransferase/uridylyl-removing enzyme (877 aa).

A uridylyltransferase region spans residues 1 to 335 (MDGPNSDRAH…HRDDAFSPTP (335 aa)). Residues 336 to 695 (VNDHFQAVND…LRPESLRGSV (360 aa)) are uridylyl-removing. In terms of domain architecture, HD spans 454–576 (VDEHTLFVVR…VRNQNTLNHL (123 aa)). ACT domains follow at residues 696 to 778 (EVFI…AVSR) and 805 to 877 (ILEL…VGDQ).

Belongs to the GlnD family. It depends on Mg(2+) as a cofactor.

The catalysed reaction is [protein-PII]-L-tyrosine + UTP = [protein-PII]-uridylyl-L-tyrosine + diphosphate. It carries out the reaction [protein-PII]-uridylyl-L-tyrosine + H2O = [protein-PII]-L-tyrosine + UMP + H(+). Its activity is regulated as follows. Uridylyltransferase (UTase) activity is inhibited by glutamine, while glutamine activates uridylyl-removing (UR) activity. Functionally, modifies, by uridylylation and deuridylylation, the PII regulatory proteins (GlnB and homologs), in response to the nitrogen status of the cell that GlnD senses through the glutamine level. Under low glutamine levels, catalyzes the conversion of the PII proteins and UTP to PII-UMP and PPi, while under higher glutamine levels, GlnD hydrolyzes PII-UMP to PII and UMP (deuridylylation). Thus, controls uridylylation state and activity of the PII proteins, and plays an important role in the regulation of nitrogen fixation and metabolism. This Methylococcus capsulatus (strain ATCC 33009 / NCIMB 11132 / Bath) protein is Bifunctional uridylyltransferase/uridylyl-removing enzyme.